A 354-amino-acid polypeptide reads, in one-letter code: Protein Wnt-8a (354 aa).

The first 19 residues, Met-1–Gly-19, serve as a signal peptide directing secretion. An intrachain disulfide couples Cys-54 to Cys-65. An N-linked (GlcNAc...) asparagine glycan is attached at Asn-103. Intrachain disulfides connect Cys-104-Cys-112, Cys-114-Cys-132, Cys-180-Cys-194, Cys-182-Cys-189, Cys-259-Cys-297, Cys-275-Cys-290, Cys-294-Cys-336, Cys-312-Cys-327, Cys-314-Cys-324, and Cys-319-Cys-320. Residue Ser-186 is the site of O-palmitoleoyl serine attachment. A glycan (N-linked (GlcNAc...) asparagine) is linked at Asn-262.

Belongs to the Wnt family. Forms a soluble 1:1 complex with AFM; this prevents oligomerization and is required for prolonged biological activity. The complex with AFM may represent the physiological form in body fluids. In terms of processing, palmitoleoylation is required for efficient binding to frizzled receptors. Depalmitoleoylation leads to Wnt signaling pathway inhibition. Post-translationally, proteolytic processing by TIKI1 and TIKI2 promotes oxidation and formation of large disulfide-bond oligomers, leading to inactivation of WNT8A.

Its subcellular location is the secreted. The protein localises to the extracellular space. It is found in the extracellular matrix. Its function is as follows. Ligand for members of the frizzled family of seven transmembrane receptors. Plays a role in embryonic patterning. The polypeptide is Protein Wnt-8a (Wnt8a) (Mus musculus (Mouse)).